The primary structure comprises 510 residues: Sulfoquinovosyl transferase SQD2 (510 aa).

The transit peptide at 1–83 (MTTLSSINLS…SNDMTITQVR (83 aa)) directs the protein to the chloroplast. S88 carries the phosphoserine modification. Residues 198–218 (PGVMVFGALAIAKMLSVPIVM) form a helical membrane-spanning segment.

The protein belongs to the glycosyltransferase group 1 family. Glycosyltransferase 4 subfamily.

The protein resides in the plastid. It localises to the chloroplast membrane. The enzyme catalyses UDP-alpha-D-6-sulfoquinovose + a 1,2-diacyl-sn-glycerol = a 6-sulfo-alpha-D-quinovosyldiacylglycerol + UDP + H(+). It participates in glycolipid biosynthesis. Its function is as follows. Catalyzes the transfer of the sulfoquinovose moiety from UDP-sulfoquinovose to diacylglycerol during sulfolipid biosynthesis. Sulfolipid contributes to maintaining a negatively charged lipid-water interface, a requirement for proper function of photosynthetic membranes. Sulfolipid may also function as a substitute of anionic phospholipids under phosphate-limited growth conditions. This is Sulfoquinovosyl transferase SQD2 from Arabidopsis thaliana (Mouse-ear cress).